We begin with the raw amino-acid sequence, 315 residues long: Universal stress protein E (315 aa).

The protein belongs to the universal stress protein A family.

It is found in the cytoplasm. In terms of biological role, required for resistance to DNA-damaging agents. The protein is Universal stress protein E (uspE) of Salmonella typhi.